The primary structure comprises 194 residues: dCTP deaminase (194 aa).

DCTP-binding positions include 110–115 (RSSLAR), Asp-128, 136–138 (VLE), Tyr-171, Lys-178, and Gln-182. Residue Glu-138 is the Proton donor/acceptor of the active site.

It belongs to the dCTP deaminase family. As to quaternary structure, homotrimer.

It carries out the reaction dCTP + H2O + H(+) = dUTP + NH4(+). It functions in the pathway pyrimidine metabolism; dUMP biosynthesis; dUMP from dCTP (dUTP route): step 1/2. Its function is as follows. Catalyzes the deamination of dCTP to dUTP. This is dCTP deaminase from Pasteurella multocida (strain Pm70).